We begin with the raw amino-acid sequence, 309 residues long: Manganese ABC transporter substrate-binding lipoprotein PsaA (309 aa).

The signal sequence occupies residues 1–19; it reads MKKLGTLLVLFLSAIILVA. C20 is lipidated: N-palmitoyl cysteine. Residue C20 is the site of S-diacylglycerol cysteine attachment. Mn(2+) contacts are provided by H67, H139, E205, and D280.

Belongs to the bacterial solute-binding protein 9 family. Lipoprotein receptor antigen (Lrai) subfamily.

Its subcellular location is the cell membrane. Its function is as follows. Part of the ATP-binding cassette (ABC) transport system PsaABC involved in manganese import. Binds manganese with high affinity and specificity and delivers it to the membrane permease for translocation into the cytoplasm. Also acts as an adhesin which is involved on adherence to extracellular matrix. It is an important factor in pathogenesis and infection. The protein is Manganese ABC transporter substrate-binding lipoprotein PsaA (psaA) of Streptococcus pneumoniae serotype 4 (strain ATCC BAA-334 / TIGR4).